A 675-amino-acid polypeptide reads, in one-letter code: Protein distal antenna (675 aa).

The HTH psq-type domain occupies 5–56; that stretch reads TKGKRPLRHLTATDKIDAIQRIHDGESKASVARDIGVPESTLRGWCKNEEKL. Residues 32–52 constitute a DNA-binding region (H-T-H motif); that stretch reads KASVARDIGVPESTLRGWCKN. Disordered regions lie at residues 239 to 269, 337 to 393, 458 to 534, 546 to 596, and 655 to 675; these read QSLR…KNPS, LYSS…PEDT, LNII…SKCN, FQNP…AHKS, and ERQQ…RRRK. A compositionally biased stretch (low complexity) spans 339–368; sequence SSMPRPSSPQQSSSPPQQHQQVQHHPSTQT. A compositionally biased stretch (pro residues) spans 369-384; that stretch reads PTPPIVSTPQPTPPSS. The span at 469-478 shows a compositional bias: basic and acidic residues; it reads VKSEPEDLSN. The span at 479-493 shows a compositional bias: low complexity; sequence HNHSSSNAAAVAAPA. The span at 499–508 shows a compositional bias: polar residues; sequence FNPSPSTSAK. Residues 513–528 show a composition bias toward acidic residues; the sequence is QEDDEEQAGPADDESP. Low complexity predominate over residues 559–579; sequence NLSIRSNNSPRRRSVSPAVSN.

As to quaternary structure, homomers. Interacts with itself, danr, ey and dac to form a complex (or complexes) containing the RD factors.

It localises to the nucleus. Its function is as follows. Probable transcription factor with a role in the retinal determination (RD) network. Contributes to differentiation of antenna-specific characteristics. The protein is Protein distal antenna of Aedes aegypti (Yellowfever mosquito).